The primary structure comprises 112 residues: Small ribosomal subunit protein bS6c (112 aa).

Belongs to the bacterial ribosomal protein bS6 family.

It is found in the plastid. Its subcellular location is the chloroplast. In terms of biological role, binds together with bS18 to 16S ribosomal RNA. The polypeptide is Small ribosomal subunit protein bS6c (rps6) (Porphyra purpurea (Red seaweed)).